Consider the following 154-residue polypeptide: Myoglobin (154 aa).

The region spanning 2–148 (GLSDGEWQLV…FRKDIAAKYK (147 aa)) is the Globin domain. Ser4 carries the post-translational modification Phosphoserine. His65 is a binding site for nitrite. Residue His65 participates in O2 binding. Thr68 is modified (phosphothreonine). His94 lines the heme b pocket.

The protein belongs to the globin family. Monomeric.

Its subcellular location is the cytoplasm. It is found in the sarcoplasm. It carries out the reaction Fe(III)-heme b-[protein] + nitric oxide + H2O = Fe(II)-heme b-[protein] + nitrite + 2 H(+). It catalyses the reaction H2O2 + AH2 = A + 2 H2O. Monomeric heme protein which primary function is to store oxygen and facilitate its diffusion within muscle tissues. Reversibly binds oxygen through a pentacoordinated heme iron and enables its timely and efficient release as needed during periods of heightened demand. Depending on the oxidative conditions of tissues and cells, and in addition to its ability to bind oxygen, it also has a nitrite reductase activity whereby it regulates the production of bioactive nitric oxide. Under stress conditions, like hypoxia and anoxia, it also protects cells against reactive oxygen species thanks to its pseudoperoxidase activity. This chain is Myoglobin (MB), found in Delphinus delphis (Short-beaked common dolphin).